The sequence spans 369 residues: tRNA/tmRNA (uracil-C(5))-methyltransferase (369 aa).

S-adenosyl-L-methionine contacts are provided by Q190, Y218, N223, E239, and D301. C326 functions as the Nucleophile in the catalytic mechanism. The active-site Proton acceptor is E360.

It belongs to the class I-like SAM-binding methyltransferase superfamily. RNA M5U methyltransferase family. TrmA subfamily.

It carries out the reaction uridine(54) in tRNA + S-adenosyl-L-methionine = 5-methyluridine(54) in tRNA + S-adenosyl-L-homocysteine + H(+). The catalysed reaction is uridine(341) in tmRNA + S-adenosyl-L-methionine = 5-methyluridine(341) in tmRNA + S-adenosyl-L-homocysteine + H(+). Its function is as follows. Dual-specificity methyltransferase that catalyzes the formation of 5-methyluridine at position 54 (m5U54) in all tRNAs, and that of position 341 (m5U341) in tmRNA (transfer-mRNA). This chain is tRNA/tmRNA (uracil-C(5))-methyltransferase, found in Vibrio atlanticus (strain LGP32) (Vibrio splendidus (strain Mel32)).